We begin with the raw amino-acid sequence, 115 residues long: Large ribosomal subunit protein bL20 (115 aa).

Belongs to the bacterial ribosomal protein bL20 family.

Binds directly to 23S ribosomal RNA and is necessary for the in vitro assembly process of the 50S ribosomal subunit. It is not involved in the protein synthesizing functions of that subunit. The protein is Large ribosomal subunit protein bL20 of Methylococcus capsulatus (strain ATCC 33009 / NCIMB 11132 / Bath).